Consider the following 103-residue polypeptide: Small ribosomal subunit protein uS14c (103 aa).

A disordered region spans residues 34–56 (KVSPLSLSEKTKMQEKLQSLPRN).

The protein belongs to the universal ribosomal protein uS14 family. Part of the 30S ribosomal subunit.

It is found in the plastid. The protein localises to the chloroplast. In terms of biological role, binds 16S rRNA, required for the assembly of 30S particles. The sequence is that of Small ribosomal subunit protein uS14c from Saccharum hybrid (Sugarcane).